The sequence spans 289 residues: Diaminopimelate epimerase (289 aa).

Asn-13, Gln-47, and Asn-67 together coordinate substrate. Catalysis depends on Cys-76, which acts as the Proton donor. Substrate-binding positions include 77–78, Asn-167, Asn-200, and 218–219; these read GN and ER. Cys-227 serves as the catalytic Proton acceptor. Residue 228-229 coordinates substrate; the sequence is GT.

The protein belongs to the diaminopimelate epimerase family. Homodimer.

It localises to the cytoplasm. It catalyses the reaction (2S,6S)-2,6-diaminopimelate = meso-2,6-diaminopimelate. The protein operates within amino-acid biosynthesis; L-lysine biosynthesis via DAP pathway; DL-2,6-diaminopimelate from LL-2,6-diaminopimelate: step 1/1. Its function is as follows. Catalyzes the stereoinversion of LL-2,6-diaminopimelate (L,L-DAP) to meso-diaminopimelate (meso-DAP), a precursor of L-lysine and an essential component of the bacterial peptidoglycan. This Burkholderia pseudomallei (strain 668) protein is Diaminopimelate epimerase.